A 318-amino-acid polypeptide reads, in one-letter code: NADH-ubiquinone oxidoreductase chain 1 (318 aa).

Helical transmembrane passes span 3–23, 70–90, 100–120, 146–166, 171–191, 222–242, 253–273, and 294–314; these read MVNL…LTLI, MFII…IPLP, LAVL…LWSG, LAII…STLI, HTWL…STLA, LFFM…AILF, ELYT…FLWI, and LPLT…MAGI.

This sequence belongs to the complex I subunit 1 family.

The protein localises to the mitochondrion inner membrane. The enzyme catalyses a ubiquinone + NADH + 5 H(+)(in) = a ubiquinol + NAD(+) + 4 H(+)(out). Its function is as follows. Core subunit of the mitochondrial membrane respiratory chain NADH dehydrogenase (Complex I) that is believed to belong to the minimal assembly required for catalysis. Complex I functions in the transfer of electrons from NADH to the respiratory chain. The immediate electron acceptor for the enzyme is believed to be ubiquinone. The chain is NADH-ubiquinone oxidoreductase chain 1 (MT-ND1) from Pteropus vampyrus (Large flying fox).